The following is a 125-amino-acid chain: Glutaredoxin-C1 (125 aa).

The 101-residue stretch at 19–119 folds into the Glutaredoxin domain; sequence VNKAKEIVSA…PLLTEAGAIA (101 aa). A disulfide bridge links Cys39 with Cys42.

Belongs to the glutaredoxin family. CPYC subfamily.

The protein resides in the cytoplasm. In terms of biological role, has a glutathione-disulfide oxidoreductase activity in the presence of NADPH and glutathione reductase. Reduces low molecular weight disulfides and proteins. The chain is Glutaredoxin-C1 (GRXC1) from Arabidopsis thaliana (Mouse-ear cress).